A 109-amino-acid polypeptide reads, in one-letter code: MQQFEWIHGAWLGLAIMLEIAANVLLKFSDGFRRKCYGILSLAAVLAAFSALSQAVKGIDLSVAYALWGGFGIAATLAAGWVLFGQRLNPKGWVGVILLLAGMVMIKFA.

Transmembrane regions (helical) follow at residues 6–26 (WIHG…NVLL), 36–56 (CYGI…SQAV), 64–84 (AYAL…WVLF), and 88–108 (LNPK…MIKF).

This sequence belongs to the drug/metabolite transporter (DMT) superfamily. Small multidrug resistance (SMR) (TC 2.A.7.1) family. MdtI subfamily. In terms of assembly, forms a complex with MdtJ.

Its subcellular location is the cell inner membrane. In terms of biological role, catalyzes the excretion of spermidine. This Salmonella choleraesuis (strain SC-B67) protein is Spermidine export protein MdtI.